The primary structure comprises 230 residues: Small ribosomal subunit protein uS2 (230 aa).

This sequence belongs to the universal ribosomal protein uS2 family.

In Prochlorococcus marinus (strain NATL2A), this protein is Small ribosomal subunit protein uS2.